Consider the following 447-residue polypeptide: Serine/threonine-protein phosphatase 2A 55 kDa regulatory subunit B gamma isoform (447 aa).

WD repeat units follow at residues 22 to 61 (TEAD…KNAP), 87 to 128 (EIEE…KRPE), 171 to 209 (GHTY…RSFN), 220 to 260 (DLTE…LCDK), 279 to 317 (EIIS…RPIE), 334 to 375 (ENDC…DVTL), and 410 to 446 (DFTK…NSDV).

This sequence belongs to the phosphatase 2A regulatory subunit B family. PP2A consists of a common heterodimeric core enzyme, composed of a 36 kDa catalytic subunit (subunit C) and a 65 kDa constant regulatory subunit (PR65 or subunit A), that associates with a variety of regulatory subunits. Proteins that associate with the core dimer include three families of regulatory subunits B (the R2/B/PR55/B55, R3/B''/PR72/PR130/PR59 and R5/B'/B56 families), the 48 kDa variable regulatory subunit, viral proteins, and cell signaling molecules. Interacts with IER5. In terms of tissue distribution, highly expressed in brain.

Functionally, the B regulatory subunit might modulate substrate selectivity and catalytic activity, and might also direct the localization of the catalytic enzyme to a particular subcellular compartment. The sequence is that of Serine/threonine-protein phosphatase 2A 55 kDa regulatory subunit B gamma isoform (PPP2R2C) from Oryctolagus cuniculus (Rabbit).